The sequence spans 217 residues: Somatotropin (217 aa).

The N-terminal stretch at 1-26 is a signal peptide; the sequence is MATGSRTSLLLAFGLLCLPWLQEGSA. Position 44 (histidine 44) interacts with Zn(2+). The cysteines at positions 79 and 191 are disulfide-linked. Serine 132 is subject to Phosphoserine. Glutamine 163 bears the Deamidated glutamine; by deterioration mark. Residue serine 176 is modified to Phosphoserine. Position 178 is a deamidated asparagine; by deterioration (asparagine 178). Glutamate 200 contacts Zn(2+). A disulfide bridge connects residues cysteine 208 and cysteine 215.

It belongs to the somatotropin/prolactin family. Monomer, dimer, trimer, tetramer and pentamer, disulfide-linked or non-covalently associated, in homomeric and heteromeric combinations. Can also form a complex either with GHBP or with the alpha2-macroglobulin complex.

The protein resides in the secreted. Its function is as follows. Plays an important role in growth control. Its major role in stimulating body growth is to stimulate the liver and other tissues to secrete IGF1. It stimulates both the differentiation and proliferation of myoblasts. It also stimulates amino acid uptake and protein synthesis in muscle and other tissues. This chain is Somatotropin (GH1), found in Homo sapiens (Human).